Consider the following 314-residue polypeptide: MTEQRPSQQAKQPRRDVHGVLLLDKPIGWSSNDALIRAKRLLWAKKAGHTGTLDPLATGLLPLCFGEATKFSQDLLEADKTYEAVVRLGIRTSTADAEGEVLSERPVAVTPEQLRAAIGRFVGEIDQVPPMHSALKKDGKPLYEYARAGQTVERAARRVTIRAIDVLATDLDAAAPTVTLRVCCSKGTYIRTLGEDLGEALGCGAHLVALRRTQVGSLTLDGAVTLEALEAASEDQRAALLAPVDALLQTLPRVELGAEDSRRFLHGQRLPLQLSLPSAEQVRVYGARGEAGASLLGVAAWQGGVLRPERLVHL.

Asp54 acts as the Nucleophile in catalysis.

Belongs to the pseudouridine synthase TruB family. Type 1 subfamily.

The enzyme catalyses uridine(55) in tRNA = pseudouridine(55) in tRNA. Responsible for synthesis of pseudouridine from uracil-55 in the psi GC loop of transfer RNAs. This Ralstonia nicotianae (strain ATCC BAA-1114 / GMI1000) (Ralstonia solanacearum) protein is tRNA pseudouridine synthase B.